The chain runs to 306 residues: MTNLPKFSTALLHPRYWLTWLGIGVLWLVVQLPYPVIYRLGCGLGKLALRFMKRRAKIVHRNLELCFPEMSEQERRKMVVKNFESVGMGLMETGMAWFWPDRRIARWTEVIGMEHIRDVQAQKRGILLVGIHFLTLELGARQFGMQEPGIGVYRPNDNPLIDWLQTWGRLRSNKSMLDRKDLKGMIKALKKGEVVWYAPDHDYGPRSSVFVPLFAVEQAATTTGTWMLARMSGACLVPFVPRRKPDGKGYQLIMLPPECSPPLDDAETTAAWMNKVVEKCIMMAPEQYMWLHRRFKTRPEGVPSRY.

The helical transmembrane segment at 17–37 (WLTWLGIGVLWLVVQLPYPVI) threads the bilayer. An HXXXXD motif motif is present at residues 132-137 (HFLTLE).

This sequence belongs to the LpxL/LpxM/LpxP family. In terms of assembly, monomer.

It localises to the cell inner membrane. It catalyses the reaction dodecanoyl-[ACP] + alpha-Kdo-(2-&gt;4)-alpha-Kdo-(2-&gt;6)-lipid IVA (E. coli) = alpha-Kdo-(2-&gt;4)-alpha-Kdo-(2-&gt;6)-(dodecanoyl)-lipid IVA (E. coli) + holo-[ACP]. It functions in the pathway glycolipid biosynthesis; KDO(2)-lipid A biosynthesis; KDO(2)-lipid A from CMP-3-deoxy-D-manno-octulosonate and lipid IV(A): step 3/4. The protein operates within bacterial outer membrane biogenesis; lipopolysaccharide biosynthesis. Its function is as follows. Catalyzes the transfer of laurate from lauroyl-[acyl-carrier-protein] (ACP) to Kdo(2)-lipid IV(A) to form Kdo(2)-(lauroyl)-lipid IV(A). Has 10 fold selectivity for lauroyl-ACP over myristoyl-ACP. In vitro, can also catalyze a slow second acylation reaction leading to the formation of Kdo(2)-(dilauroyl)-lipid IV(A). This Escherichia coli (strain K12) protein is Lipid A biosynthesis lauroyltransferase.